Consider the following 261-residue polypeptide: 5'-nucleotidase SurE (261 aa).

A divalent metal cation contacts are provided by Asp-12, Asp-13, Ser-43, and Asn-100.

This sequence belongs to the SurE nucleotidase family. Requires a divalent metal cation as cofactor.

It is found in the cytoplasm. It catalyses the reaction a ribonucleoside 5'-phosphate + H2O = a ribonucleoside + phosphate. Its function is as follows. Nucleotidase that shows phosphatase activity on nucleoside 5'-monophosphates. This chain is 5'-nucleotidase SurE, found in Protochlamydia amoebophila (strain UWE25).